A 438-amino-acid chain; its full sequence is Putative cytochrome P450 140 (438 aa).

Cys381 is a binding site for heme.

Belongs to the cytochrome P450 family. It depends on heme as a cofactor.

In Mycobacterium bovis (strain ATCC BAA-935 / AF2122/97), this protein is Putative cytochrome P450 140 (cyp140).